We begin with the raw amino-acid sequence, 564 residues long: Bifunctional protein CrtB/UppS (564 aa).

D329 is an active-site residue. Mg(2+) is bound at residue D329. Substrate-binding positions include 330–333, W334, H346, and 374–376; these read GNRR and STE. The Proton acceptor role is filled by N377. Residues W378, R380, R497, and 502-504 each bind substrate; that span reads RIS. E515 lines the Mg(2+) pocket.

It in the N-terminal section; belongs to the phytoene/squalene synthase family. In the C-terminal section; belongs to the UPP synthase family. Homodimer. The cofactor is Mg(2+).

It catalyses the reaction 2 (2E,6E,10E)-geranylgeranyl diphosphate = 15-cis-phytoene + 2 diphosphate. It participates in carotenoid biosynthesis; phytoene biosynthesis; all-trans-phytoene from geranylgeranyl diphosphate: step 1/1. Catalyzes the reaction from prephytoene diphosphate to phytoene. Functionally, catalyzes the condensation of isopentenyl diphosphate (IPP) with allylic pyrophosphates generating different type of terpenoids. This chain is Bifunctional protein CrtB/UppS (crtB/uppS3), found in Streptomyces coelicolor (strain ATCC BAA-471 / A3(2) / M145).